Consider the following 236-residue polypeptide: 2-C-methyl-D-erythritol 4-phosphate cytidylyltransferase (236 aa).

The protein belongs to the IspD/TarI cytidylyltransferase family. IspD subfamily.

It catalyses the reaction 2-C-methyl-D-erythritol 4-phosphate + CTP + H(+) = 4-CDP-2-C-methyl-D-erythritol + diphosphate. It participates in isoprenoid biosynthesis; isopentenyl diphosphate biosynthesis via DXP pathway; isopentenyl diphosphate from 1-deoxy-D-xylulose 5-phosphate: step 2/6. In terms of biological role, catalyzes the formation of 4-diphosphocytidyl-2-C-methyl-D-erythritol from CTP and 2-C-methyl-D-erythritol 4-phosphate (MEP). The polypeptide is 2-C-methyl-D-erythritol 4-phosphate cytidylyltransferase (Burkholderia thailandensis (strain ATCC 700388 / DSM 13276 / CCUG 48851 / CIP 106301 / E264)).